The following is a 116-amino-acid chain: Glycine-rich protein 3 short isoform (116 aa).

Residues 1–24 form the signal peptide; it reads MASKTLLLLGLFAFLFIVSEMAAA. The interval 27 to 83 is disordered; it reads VKSESEETVKPEQHGGGFGDNGGGRYQGGGGHGGHGGGGYQGGGGRYQGGGGRQGGG. A compositionally biased stretch (basic and acidic residues) spans 29-39; sequence SESEETVKPEQ. Gly residues predominate over residues 40–83; sequence HGGGFGDNGGGRYQGGGGHGGHGGGGYQGGGGRYQGGGGRQGGG. 5 tandem repeats follow at residues 54 to 59, 62 to 67, 68 to 73, 75 to 80, and 81 to 86. The tract at residues 54–86 is 5 X 6 AA tandem repeats of G-G-G-G-[HYRS]-[GYQ]; that stretch reads GGGGHGGHGGGGYQGGGGRYQGGGGRQGGGGSY.

It belongs to the GRP family. Interacts with WAK1 (via the extracellular domain). Component of a 500 kDa complex, composed of GRP3 or GRP3-S, WAK1 and KAPP.

Its subcellular location is the secreted. It localises to the extracellular space. The protein resides in the extracellular matrix. Its function is as follows. Regulates the function of the receptor protein kinase WAK1. The protein is Glycine-rich protein 3 short isoform (GRP3S) of Arabidopsis thaliana (Mouse-ear cress).